Here is a 436-residue protein sequence, read N- to C-terminus: GTPase Der (436 aa).

EngA-type G domains lie at 4-167 (PTVA…PVEE) and 175-351 (IRFS…ESQN). Residues 10–17 (GRPNVGKS), 57–61 (DTGGI), 119–122 (NKVD), 181–188 (GRPNVGKS), 229–233 (DTAGM), and 294–297 (NKWD) contribute to the GTP site. The KH-like domain occupies 352–436 (KRIPSAVLND…PINLIARKRK (85 aa)).

It belongs to the TRAFAC class TrmE-Era-EngA-EngB-Septin-like GTPase superfamily. EngA (Der) GTPase family. As to quaternary structure, associates with the 50S ribosomal subunit.

In terms of biological role, GTPase that plays an essential role in the late steps of ribosome biogenesis. The sequence is that of GTPase Der from Streptococcus agalactiae serotype III (strain NEM316).